The primary structure comprises 119 residues: UPF0102 protein HI_1656 (119 aa).

This sequence belongs to the UPF0102 family.

The chain is UPF0102 protein HI_1656 from Haemophilus influenzae (strain ATCC 51907 / DSM 11121 / KW20 / Rd).